We begin with the raw amino-acid sequence, 390 residues long: Deoxyhypusine synthase-like protein (390 aa).

This sequence belongs to the deoxyhypusine synthase family.

This is Deoxyhypusine synthase-like protein from Nostoc punctiforme (strain ATCC 29133 / PCC 73102).